Reading from the N-terminus, the 1187-residue chain is Probable histidine kinase 5 (1187 aa).

The Extracellular portion of the chain corresponds to 1 to 175; that stretch reads MSRVGECGGG…QNNALSFNHG (175 aa). Residues 176–196 form a helical membrane-spanning segment; it reads MIFSLSASLGIVVILVVITIF. Residues 197 to 226 lie on the Cytoplasmic side of the membrane; sequence KRGKQANELCQHEKLLQTPSVKISRKWSKR. The helical transmembrane segment at 227 to 247 threads the bilayer; sequence ALLLGVLVGLCSSVWIFSSMH. Residues 248–531 lie on the Extracellular side of the membrane; the sequence is ADVVARRIEN…FKHAPSLPWS (284 aa). One can recognise a CHASE domain in the interval 295-519; it reads NPSAIDQKTF…GDPTRKHVMH (225 aa). Residues 532-552 form a helical membrane-spanning segment; it reads AIMISSAVAIIVLLVGYIIYA. At 553–1187 the chain is on the cytoplasmic side; it reads TLNSLEEAED…LEADATDPLT (635 aa). Positions 587–862 constitute a Histidine kinase domain; the sequence is TVSHEIRTPM…TFSFTAIFKE (276 aa). A Phosphohistidine; by autocatalysis modification is found at His590. Response regulatory domains follow at residues 886–1017 and 1041–1178; these read RALV…SKAL and NILV…AHFL. 2 positions are modified to 4-aspartylphosphate: Asp942 and Asp1091.

Post-translationally, activation probably requires a transfer of a phosphate group between a His in the transmitter domain and an Asp of the receiver domain. In terms of tissue distribution, highly expressed in young leaves and at lower levels in roots, mature leaves, stems and spikelets.

It is found in the cell membrane. It carries out the reaction ATP + protein L-histidine = ADP + protein N-phospho-L-histidine.. Functionally, cytokinin receptor related to bacterial two-component regulators. Functions as a histidine kinase and transmits the stress signal to a downstream MAPK cascade. This is Probable histidine kinase 5 from Oryza sativa subsp. japonica (Rice).